Here is a 126-residue protein sequence, read N- to C-terminus: UPF0344 protein ABC2900 (126 aa).

Transmembrane regions (helical) follow at residues 16-36 (ASHE…YFLF), 43-63 (AGTI…VTGA), 66-86 (LIAY…VLLI), and 104-124 (GMLF…YGII).

It belongs to the UPF0344 family.

The protein resides in the cell membrane. The sequence is that of UPF0344 protein ABC2900 from Shouchella clausii (strain KSM-K16) (Alkalihalobacillus clausii).